Consider the following 649-residue polypeptide: Replication factor C small subunit (649 aa).

55-385 contributes to the ATP binding site; sequence GPAGVGKCVT…GCIPTVMHNT (331 aa).

It belongs to the activator 1 small subunits family. RfcS subfamily. As to quaternary structure, heteromultimer composed of small subunits (RfcS) and large subunits (RfcL). In terms of processing, this protein undergoes a protein self splicing that involves a post-translational excision of the intervening region (intein) followed by peptide ligation.

Part of the RFC clamp loader complex which loads the PCNA sliding clamp onto DNA. The sequence is that of Replication factor C small subunit (rfcS) from Haloquadratum walsbyi (strain DSM 16790 / HBSQ001).